Reading from the N-terminus, the 348-residue chain is Dihydroorotate dehydrogenase (quinone) (348 aa).

Residues 60-64 and T84 contribute to the FMN site; that span reads AGLDK. K64 provides a ligand contact to substrate. 109-113 contributes to the substrate binding site; it reads NRMGF. Positions 137 and 170 each coordinate FMN. N170 is a binding site for substrate. S173 (nucleophile) is an active-site residue. N175 is a substrate binding site. K215 and T243 together coordinate FMN. A substrate-binding site is contributed by 244 to 245; it reads NT. FMN is bound by residues G266, G295, and 316–317; that span reads YS.

It belongs to the dihydroorotate dehydrogenase family. Type 2 subfamily. In terms of assembly, monomer. FMN is required as a cofactor.

It localises to the cell membrane. The catalysed reaction is (S)-dihydroorotate + a quinone = orotate + a quinol. The protein operates within pyrimidine metabolism; UMP biosynthesis via de novo pathway; orotate from (S)-dihydroorotate (quinone route): step 1/1. Functionally, catalyzes the conversion of dihydroorotate to orotate with quinone as electron acceptor. This chain is Dihydroorotate dehydrogenase (quinone), found in Nitrosospira multiformis (strain ATCC 25196 / NCIMB 11849 / C 71).